The chain runs to 136 residues: 1,4-dihydroxy-2-naphthoyl-CoA hydrolase (136 aa).

D16 is a catalytic residue.

Belongs to the 4-hydroxybenzoyl-CoA thioesterase family. DHNA-CoA hydrolase subfamily.

The catalysed reaction is 1,4-dihydroxy-2-naphthoyl-CoA + H2O = 1,4-dihydroxy-2-naphthoate + CoA + H(+). It functions in the pathway cofactor biosynthesis; phylloquinone biosynthesis. It participates in quinol/quinone metabolism; 1,4-dihydroxy-2-naphthoate biosynthesis; 1,4-dihydroxy-2-naphthoate from chorismate: step 7/7. Functionally, catalyzes the hydrolysis of 1,4-dihydroxy-2-naphthoyl-CoA (DHNA-CoA) to 1,4-dihydroxy-2-naphthoate (DHNA), a reaction involved in phylloquinone (vitamin K1) biosynthesis. The polypeptide is 1,4-dihydroxy-2-naphthoyl-CoA hydrolase (Synechococcus sp. (strain ATCC 27144 / PCC 6301 / SAUG 1402/1) (Anacystis nidulans)).